Consider the following 388-residue polypeptide: MSFQPTPEDRFTFGLWTVGWQGRDPFGDATRPALDPVETVQRLAELGAYGVTFHDDDLIPFGSSDTERESHIKRFRQALDATGMTVPMATTNLFTHPVFKDGGFTANDRDVRRYALRKTIGNIDLAAELGAKTYVAWGGREGAESGGAKDVRDALDRMKEAFDLLGEYVTAQGYDLRFAIEPKPNEPRGDILLPTVGHALAFIERLERPELYGVNPEVGHEQMAGLNFPHGIAQALWAGKLFHIDLNGQSGIKYDQDLRFGAGDLRAAFWLVDLLETAGYEGPRHFDFKPPRTEDFDGVWASAAGCMRNYLILKDRAAAFRADPEVQEALRAARLDQLAQPTAADGLDALLADRAAFEDFDVDAAAARGMAFEHLDQLAMDHLLGARG.

Catalysis depends on residues His-54 and Asp-57. Residues Glu-181, Glu-217, His-220, Asp-245, Asp-255, Asp-257, and Asp-287 each coordinate Mg(2+).

Belongs to the xylose isomerase family. In terms of assembly, homotetramer. Mg(2+) is required as a cofactor.

The protein resides in the cytoplasm. It carries out the reaction alpha-D-xylose = alpha-D-xylulofuranose. Functionally, involved in D-xylose catabolism. The polypeptide is Xylose isomerase (xylA) (Streptomyces murinus).